Consider the following 533-residue polypeptide: Di/tripeptide-binding protein 3 (533 aa).

Residues 1 to 24 (MRKILPLRAWLAAGLILGSPFSHA) form the signal peptide.

Belongs to the bacterial solute-binding protein 5 family. As to quaternary structure, the complex is composed of two ATP-binding proteins (DppD and DppF), two transmembrane proteins (DppB and DppC) and a solute-binding protein (DppA3). Five orthologous SBPs (DppA1-A5) are present in P.aeruginosa, which increases the substrate specificity of the DppBCDF transporter.

Part of the ABC transporter DppABCDF involved in the uptake of various di/tripeptides. Prefers dipeptides with acidic residues at the C-terminal end. Involved in the uptake of phaseolotoxin, a toxic tripeptide inhibiting the enzyme ornithine carbamoyltransferase. This Pseudomonas aeruginosa (strain UCBPP-PA14) protein is Di/tripeptide-binding protein 3.